The sequence spans 170 residues: MARVEL domain-containing protein 1 (170 aa).

Residues 1 to 38 (MEGERPRSDTVTTTVSSHMETISLGGSIAYDRSFLRSP) lie on the Cytoplasmic side of the membrane. The MARVEL domain maps to 34–167 (FLRSPTGVLL…STYFSFQAWR (134 aa)). Residues 39-59 (TGVLLLMEIMFGLLVWALIAG) form a helical membrane-spanning segment. Residues 60–67 (SEYFLFSA) lie on the Extracellular side of the membrane. The chain crosses the membrane as a helical span at residues 68–88 (FGWVMFVAVFYWVLSVFFFLL). The Cytoplasmic portion of the chain corresponds to 89–102 (HLTRANTRITKVPW). A helical transmembrane segment spans residues 103–123 (SLVGLCFNGSAFVLYLIAAVV). Residues 124–145 (EASSVNKDVHQHHNYNSWTASS) are Extracellular-facing. A helical membrane pass occupies residues 146 to 166 (FFAFIVTVCYALSTYFSFQAW). Residues 167–170 (RTKS) are Cytoplasmic-facing.

It localises to the membrane. Its subcellular location is the nucleus. This Xenopus laevis (African clawed frog) protein is MARVEL domain-containing protein 1 (marveld1).